The following is a 323-amino-acid chain: Sphingolipid delta(4)-desaturase DES1 (323 aa).

Residue Gly-2 is the site of N-myristoyl glycine attachment. A run of 2 helical transmembrane segments spans residues 41–61 (SNLI…FYLV) and 68–88 (WVLF…TLAI). The Histidine box-1 motif lies at 89–93 (HEVSH). A helical membrane pass occupies residues 102–122 (AMWNRWFGIFANLPIGVPYSV). Residues 128 to 132 (HMDHH) carry the Histidine box-2 motif. 3 consecutive transmembrane segments (helical) span residues 152 to 172 (FFCT…FYAF), 184 to 204 (YLEI…YYVL), and 209 to 229 (LVYM…SGHF). The short motif at 259-263 (HNEHH) is the Histidine box-3 element. Position 307 is a phosphoserine (Ser-307).

This sequence belongs to the fatty acid desaturase type 1 family. DEGS subfamily. Interacts with RLBP1; the interaction increases synthesis of chromophore-precursors by DEGS1. In terms of processing, myristoylation can target the enzyme to the mitochondria leading to an increase in ceramide levels.

Its subcellular location is the mitochondrion membrane. The protein resides in the endoplasmic reticulum membrane. The enzyme catalyses an N-acylsphinganine + 2 Fe(II)-[cytochrome b5] + O2 + 2 H(+) = an N-acylsphing-4-enine + 2 Fe(III)-[cytochrome b5] + 2 H2O. It carries out the reaction all-trans-retinol = 11-cis-retinol. The catalysed reaction is all-trans-retinol = 9-cis-retinol. It catalyses the reaction all-trans-retinol = 13-cis-retinol. The enzyme catalyses 11-cis-retinol = 13-cis-retinol. It carries out the reaction 11-cis-retinol = 9-cis-retinol. Its function is as follows. Has sphingolipid-delta-4-desaturase activity. Converts D-erythro-sphinganine to D-erythro-sphingosine (E-sphing-4-enine). Catalyzes the equilibrium isomerization of retinols. The sequence is that of Sphingolipid delta(4)-desaturase DES1 (DEGS1) from Bos taurus (Bovine).